An 872-amino-acid chain; its full sequence is Metabotropic glutamate receptor 2 (872 aa).

An N-terminal signal peptide occupies residues 1–18; the sequence is MESLLRFLALLLLRGAVA. Over 19–568 the chain is Extracellular; the sequence is EGPAKKVLTL…EYIRWGDAWA (550 aa). Cys50 and Cys92 are oxidised to a cystine. Arg57, Arg61, Ser145, Ala166, and Thr168 together coordinate L-glutamate. N-linked (GlcNAc...) asparagine glycans are attached at residues Asn203 and Asn286. 7 cysteine pairs are disulfide-bonded: Cys234–Cys518, Cys355–Cys362, Cys400–Cys407, Cys500–Cys519, Cys504–Cys522, Cys525–Cys537, and Cys540–Cys553. Position 295 (Asp295) interacts with L-glutamate. An N-linked (GlcNAc...) asparagine glycan is attached at Asn338. Lys377 is an L-glutamate binding site. An N-linked (GlcNAc...) asparagine glycan is attached at Asn402. An N-linked (GlcNAc...) asparagine glycan is attached at Asn547. A helical membrane pass occupies residues 569-589; that stretch reads VGPVTIACLGALATLFVLGVF. Residues 590–604 lie on the Cytoplasmic side of the membrane; that stretch reads VRHNATPVVKASGRE. The chain crosses the membrane as a helical span at residues 605–625; it reads LCYILLGGVFLCYCMTFIFIA. The Extracellular segment spans residues 626 to 633; the sequence is KPSTAVCT. A disulfide bond links Cys632 and Cys721. A helical membrane pass occupies residues 634 to 651; that stretch reads LRRLGLGTAFSVCYSALL. The Cytoplasmic segment spans residues 652 to 679; that stretch reads TKTNRIARIFGGAREGAQRPRFISPASQ. An important for interaction with HTR2A region spans residues 677 to 685; it reads ASQVAICLA. A helical transmembrane segment spans residues 680–700; sequence VAICLALISGQLLIVAAWLVV. The Extracellular segment spans residues 701-726; sequence EAPGIGKETAPERREVVTLRCNHRDA. The helical transmembrane segment at 727-747 threads the bilayer; sequence SMLGSLAYNVLLIALCTLYAF. Residues 748-760 are Cytoplasmic-facing; sequence KTRKCPENFNEAK. The helical transmembrane segment at 761–781 threads the bilayer; it reads FIGFTMYTTCIIWLAFLPIFY. Topologically, residues 782 to 798 are extracellular; it reads VTSSDYRVQTTTMCVSV. Residues 799 to 819 form a helical membrane-spanning segment; it reads SLSGSVVLGCLFAPKLHIILF. The Cytoplasmic segment spans residues 820 to 872; sequence QPQKNVVSHRAPTSRFGSAAPRASANLGQGSGSQLVPTVCNGREVVDSTTSSL.

The protein belongs to the G-protein coupled receptor 3 family. In terms of assembly, forms heterodimers with GRM3 or GRM4. Interacts with GNAI1. Interacts with TAMALIN. Interacts with HTR2A. In terms of tissue distribution, detected in neurons in brain cortex (at protein level).

The protein localises to the cell membrane. It is found in the synapse. Its subcellular location is the cell projection. It localises to the dendrite. Functionally, dimeric G protein-coupled receptor which is activated by the excitatory neurotransmitter L-glutamate. Plays critical roles in modulating synaptic transmission and neuronal excitability. Upon activation by glutamate, inhibits presynaptic calcium channels, reducing further glutamate release and dampening excitatory signaling. Mechanistically, ligand binding causes a conformation change that triggers signaling via guanine nucleotide-binding proteins (G proteins) and modulates the activity of down-stream effectors, such as adenylate cyclase. May mediate suppression of neurotransmission or may be involved in synaptogenesis or synaptic stabilization. This is Metabotropic glutamate receptor 2 (Grm2) from Mus musculus (Mouse).